We begin with the raw amino-acid sequence, 506 residues long: H/ACA ribonucleoprotein complex subunit DKC1 (506 aa).

The disordered stretch occupies residues 1 to 26; sequence MADTESKKEKKRKSKKISDEEVGDIQ. The active-site Nucleophile is Asp120. A PUA domain is found at 291–366; that stretch reads HKRIVMKDSA…VVAKIKRVIM (76 aa). Disordered stretches follow at residues 391 to 410 and 419 to 506; these read GLLD…WKEG and VKKG…ADSD. The span at 421–434 shows a compositional bias: basic and acidic residues; sequence KGGEASAKRKRDES. Positions 457–466 are enriched in basic residues; the sequence is EKKKKKKEKK.

It belongs to the pseudouridine synthase TruB family. As to quaternary structure, part of the H/ACA small nucleolar ribonucleoprotein (H/ACA snoRNP) complex. The complex binds a box H/ACA small nucleolar RNA (snoRNA), which may target the specific site of modification within the RNA substrate.

The protein resides in the nucleus. It is found in the nucleolus. Its subcellular location is the cajal body. The enzyme catalyses uridine in 5S rRNA = pseudouridine in 5S rRNA. Catalytic subunit of H/ACA small nucleolar ribonucleoprotein (H/ACA snoRNP) complex, which catalyzes pseudouridylation of rRNA. This involves the isomerization of uridine such that the ribose is subsequently attached to C5, instead of the normal N1. Pseudouridine ('psi') residues may serve to stabilize the conformation of rRNAs. Required for ribosome biogenesis and telomere maintenance. The protein is H/ACA ribonucleoprotein complex subunit DKC1 of Danio rerio (Zebrafish).